The following is a 374-amino-acid chain: Outer membrane protein F (374 aa).

The N-terminal stretch at 1 to 21 is a signal peptide; that stretch reads MMKRNILAVVIPALLAAGAAN. Residues 22-27 form a beta stranded membrane-spanning segment; the sequence is AAEIYN. Position 28 (lysine 28) is a topological domain, periplasmic. Residues 29-44 traverse the membrane as a beta stranded segment; sequence DGNKLDLYGKVDGLHY. At 45–55 the chain is on the extracellular side; it reads FSKDKGNDGDQ. A beta stranded transmembrane segment spans residues 56-68; sequence TYVRFGFKGETQI. The Periplasmic segment spans residues 69-70; the sequence is TD. A beta stranded transmembrane segment spans residues 71–83; the sequence is QLTGYGQWEYNVQ. Topologically, residues 84-97 are extracellular; sequence SNHAESQGTEGTKT. A beta stranded transmembrane segment spans residues 98–107; it reads RLGFAGLKFA. The Periplasmic portion of the chain corresponds to 108–110; it reads DYG. The chain crosses the membrane as a beta stranded span at residues 111–116; it reads SFDYGR. Residues 117-151 are Extracellular-facing; it reads NYGVLYDVEGWTDMLPEFGGDTYTYSDNFMTGRTN. A beta stranded membrane pass occupies residues 152 to 158; that stretch reads GVATYRN. The Periplasmic portion of the chain corresponds to 159–166; that stretch reads NNFFGLVD. The chain crosses the membrane as a beta stranded span at residues 167–178; the sequence is GLNFALQYQGKN. The Extracellular portion of the chain corresponds to 179-190; that stretch reads QNDGRDVKKQNG. Residues 191–201 form a beta stranded membrane-spanning segment; it reads DGWGISSTYDI. The Periplasmic portion of the chain corresponds to 202–203; the sequence is GE. The beta stranded transmembrane segment at 204 to 216 threads the bilayer; the sequence is GVSFGAAYASSNR. Over 217 to 230 the chain is Extracellular; it reads TDDQKLRSNERGDK. Residues 231 to 242 form a beta stranded membrane-spanning segment; sequence ADAWTVGAKYDA. Residue asparagine 243 is a topological domain, periplasmic. The beta stranded transmembrane segment at 244–255 threads the bilayer; it reads NVYLAAMYAETR. Residues 256 to 280 lie on the Extracellular side of the membrane; sequence NMTPFGGGNFTNTCAATENCGGFAS. A beta stranded membrane pass occupies residues 281-293; the sequence is KTQNFEVTAQYQF. Residues 294 to 295 are Periplasmic-facing; that stretch reads DF. Residues 296–309 traverse the membrane as a beta stranded segment; the sequence is GLRPEVSYLQSKGK. Residues 310–322 are Extracellular-facing; sequence NLNVPGVGSDQDL. A beta stranded membrane pass occupies residues 323–334; the sequence is VKYVSVGTTYYF. Topologically, residues 335–336 are periplasmic; that stretch reads NK. A beta stranded membrane pass occupies residues 337 to 346; that stretch reads NMSTYVDYKI. Residues 347 to 364 lie on the Extracellular side of the membrane; that stretch reads NLLDDNDFTKATGIATDD. A beta stranded membrane pass occupies residues 365-374; sequence IVGVGLVYQF.

Belongs to the Gram-negative porin family. Homotrimer.

Its subcellular location is the cell outer membrane. Functionally, forms pores that allow passive diffusion of small molecules across the outer membrane. This is Outer membrane protein F (ompF) from Serratia marcescens.